The sequence spans 144 residues: Large ribosomal subunit protein uL15 (144 aa).

Residues 1–13 (MKLNELKPAEGSR) show a composition bias toward basic and acidic residues. The tract at residues 1–47 (MKLNELKPAEGSRKVRNRVGRGDSSGNGKTAGRGQKGQKARSKTRLG) is disordered. A compositionally biased stretch (gly residues) spans 23–35 (DSSGNGKTAGRGQ).

It belongs to the universal ribosomal protein uL15 family. As to quaternary structure, part of the 50S ribosomal subunit.

In terms of biological role, binds to the 23S rRNA. The sequence is that of Large ribosomal subunit protein uL15 from Levilactobacillus brevis (strain ATCC 367 / BCRC 12310 / CIP 105137 / JCM 1170 / LMG 11437 / NCIMB 947 / NCTC 947) (Lactobacillus brevis).